The sequence spans 211 residues: Outer-membrane lipoprotein carrier protein (211 aa).

The N-terminal stretch at 1 to 24 (MRNRIIVSACAALAMFAIQAPAHA) is a signal peptide.

Belongs to the LolA family. Monomer.

Its subcellular location is the periplasm. Participates in the translocation of lipoproteins from the inner membrane to the outer membrane. Only forms a complex with a lipoprotein if the residue after the N-terminal Cys is not an aspartate (The Asp acts as a targeting signal to indicate that the lipoprotein should stay in the inner membrane). The protein is Outer-membrane lipoprotein carrier protein of Cupriavidus necator (strain ATCC 17699 / DSM 428 / KCTC 22496 / NCIMB 10442 / H16 / Stanier 337) (Ralstonia eutropha).